The primary structure comprises 154 residues: Large ribosomal subunit protein uL23z (154 aa).

It belongs to the universal ribosomal protein uL23 family.

Functionally, binds to a specific region on the 26S rRNA. This Arabidopsis thaliana (Mouse-ear cress) protein is Large ribosomal subunit protein uL23z (RPL23AA).